A 90-amino-acid polypeptide reads, in one-letter code: Sec-independent protein translocase protein TatA (90 aa).

The helical transmembrane segment at 2–22 (GVGGISIWQLLIVLVIILLLF) threads the bilayer. Basic and acidic residues-rich tracts occupy residues 45-68 (LRDE…HKAE) and 76-90 (ADAD…DEHK). Positions 45 to 90 (LRDEERRDAEEAATIEHKQAHKAENPSQRQQADADFKIKSGNDEHK) are disordered.

It belongs to the TatA/E family. The Tat system comprises two distinct complexes: a TatABC complex, containing multiple copies of TatA, TatB and TatC subunits, and a separate TatA complex, containing only TatA subunits. Substrates initially bind to the TatABC complex, which probably triggers association of the separate TatA complex to form the active translocon.

The protein localises to the cell inner membrane. Functionally, part of the twin-arginine translocation (Tat) system that transports large folded proteins containing a characteristic twin-arginine motif in their signal peptide across membranes. TatA could form the protein-conducting channel of the Tat system. This is Sec-independent protein translocase protein TatA from Nitrosococcus oceani (strain ATCC 19707 / BCRC 17464 / JCM 30415 / NCIMB 11848 / C-107).